Consider the following 231-residue polypeptide: Large ribosomal subunit protein uL1 (231 aa).

The protein belongs to the universal ribosomal protein uL1 family. In terms of assembly, part of the 50S ribosomal subunit.

Its function is as follows. Binds directly to 23S rRNA. The L1 stalk is quite mobile in the ribosome, and is involved in E site tRNA release. Functionally, protein L1 is also a translational repressor protein, it controls the translation of the L11 operon by binding to its mRNA. The protein is Large ribosomal subunit protein uL1 of Francisella philomiragia subsp. philomiragia (strain ATCC 25017 / CCUG 19701 / FSC 153 / O#319-036).